A 602-amino-acid polypeptide reads, in one-letter code: Beta-(1--&gt;2)glucan export ATP-binding/permease protein NdvA (602 aa).

An ABC transmembrane type-1 domain is found at Gly21–Met311. 6 helical membrane-spanning segments follow: residues Trp22–Phe42, Leu68–Leu88, Glu146–Trp166, Arg167–Val187, Val254–Leu274, and Gln276–Ile296. One can recognise an ABC transporter domain in the interval Val345–Ala579. Position 378 to 385 (Gly378 to Ser385) interacts with ATP.

Belongs to the ABC transporter superfamily. Beta-(1--&gt;2)glucan exporter (TC 3.A.1.108.1) family. In terms of assembly, homodimer.

The protein resides in the cell inner membrane. It catalyses the reaction [(1-&gt;2)-beta-D-glucosyl](n)(in) + ATP + H2O = [(1-&gt;2)-beta-D-glucosyl](n)(out) + ADP + phosphate + H(+). Functionally, involved in beta-(1--&gt;2)glucan export. Transmembrane domains (TMD) form a pore in the inner membrane and the ATP-binding domain (NBD) is responsible for energy generation. The chain is Beta-(1--&gt;2)glucan export ATP-binding/permease protein NdvA from Rhodopseudomonas palustris (strain BisB5).